Here is a 223-residue protein sequence, read N- to C-terminus: DNA mismatch repair protein MutH (223 aa).

It belongs to the MutH family.

The protein localises to the cytoplasm. Its function is as follows. Sequence-specific endonuclease that cleaves unmethylated GATC sequences. It is involved in DNA mismatch repair. This is DNA mismatch repair protein MutH from Haemophilus influenzae (strain ATCC 51907 / DSM 11121 / KW20 / Rd).